The sequence spans 338 residues: Replication factor C small subunit (338 aa).

Residue 53 to 60 coordinates ATP; sequence GPPGVGKT.

The protein belongs to the activator 1 small subunits family. RfcS subfamily. As to quaternary structure, heteromultimer composed of small subunits (RfcS) and large subunits (RfcL).

In terms of biological role, part of the RFC clamp loader complex which loads the PCNA sliding clamp onto DNA. The sequence is that of Replication factor C small subunit from Methanosarcina acetivorans (strain ATCC 35395 / DSM 2834 / JCM 12185 / C2A).